The sequence spans 255 residues: F-box/SPRY domain-containing protein 1 (255 aa).

Residues 3 to 51 (DPVAALCNYNVLEVIFSYLELDDLSHCSQVCKSWYHFLNDENSDVWRWH) enclose the F-box domain. Residues 61–253 (LKSDLLSSVP…VSMVYLGTPL (193 aa)) form the B30.2/SPRY domain.

The protein belongs to the FBXO45/Fsn family. Component of an E3 ubiquitin ligase complex composed of hiw and Fsn.

It is found in the synapse. It participates in protein modification; protein ubiquitination. Required in the presynaptic motoneuron to down-regulate the levels of wnd and restrain synaptic terminal growth at the neuromuscular junction (NMJ). This Drosophila sechellia (Fruit fly) protein is F-box/SPRY domain-containing protein 1.